Reading from the N-terminus, the 46-residue chain is Amine oxidase [flavin-containing] A (46 aa).

The protein belongs to the flavin monoamine oxidase family. As to quaternary structure, monomer, homo- or heterodimer (containing two subunits of similar size). Each subunit contains a covalently bound flavin. Enzymatically active as monomer. Requires FAD as cofactor.

It localises to the mitochondrion outer membrane. The catalysed reaction is a secondary aliphatic amine + O2 + H2O = a primary amine + an aldehyde + H2O2. It catalyses the reaction a primary methyl amine + O2 + H2O = an aldehyde + H2O2 + NH4(+). The enzyme catalyses (R)-adrenaline + O2 + H2O = (R)-3,4-dihydroxymandelaldehyde + methylamine + H2O2. It carries out the reaction dopamine + O2 + H2O = 3,4-dihydroxyphenylacetaldehyde + H2O2 + NH4(+). The catalysed reaction is tyramine + O2 + H2O = (4-hydroxyphenyl)acetaldehyde + H2O2 + NH4(+). It catalyses the reaction (R)-noradrenaline + O2 + H2O = (R)-3,4-dihydroxymandelaldehyde + H2O2 + NH4(+). The enzyme catalyses serotonin + O2 + H2O = (5-hydroxyindol-3-yl)acetaldehyde + H2O2 + NH4(+). It carries out the reaction kynuramine + O2 + H2O = 3-(2-aminophenyl)-3-oxopropanal + H2O2 + NH4(+). The catalysed reaction is tryptamine + O2 + H2O = indole-3-acetaldehyde + H2O2 + NH4(+). It catalyses the reaction 2-phenylethylamine + O2 + H2O = 2-phenylacetaldehyde + H2O2 + NH4(+). Functionally, catalyzes the oxidative deamination of primary and some secondary amine such as neurotransmitters, with concomitant reduction of oxygen to hydrogen peroxide and has important functions in the metabolism of neuroactive and vasoactive amines in the central nervous system and peripheral tissues. Preferentially oxidizes serotonin. Also catalyzes the oxidative deamination of kynuramine to 3-(2-aminophenyl)-3-oxopropanal that can spontaneously condense to 4-hydroxyquinoline. This Ovis aries (Sheep) protein is Amine oxidase [flavin-containing] A.